The sequence spans 164 residues: Ribosome maturation factor RimP (164 aa).

The protein belongs to the RimP family.

It localises to the cytoplasm. Required for maturation of 30S ribosomal subunits. This is Ribosome maturation factor RimP from Cellvibrio japonicus (strain Ueda107) (Pseudomonas fluorescens subsp. cellulosa).